The chain runs to 311 residues: Transcription factor BIM2 (311 aa).

Disordered stretches follow at residues 1–60 (MRTG…RRSK) and 271–311 (ANQG…MKTL). Basic and acidic residues-rich tracts occupy residues 33 to 44 (SNRDSKENDKAS) and 51 to 60 (SVTEQRRRSK). One can recognise a bHLH domain in the interval 45–95 (AIRSKHSVTEQRRRSKINERFQILRELIPNSEQKRDTASFLLEVIDYVQYL).

As to quaternary structure, homodimer. Interacts with the N-terminus of BZR2/BES1. As to expression, expressed constitutively in roots, leaves, stems, and flowers.

It is found in the nucleus. Its function is as follows. Positive brassinosteroid-signaling protein. The polypeptide is Transcription factor BIM2 (BIM2) (Arabidopsis thaliana (Mouse-ear cress)).